Reading from the N-terminus, the 464-residue chain is 3-isopropylmalate dehydratase large subunit (464 aa).

Positions 345, 405, and 408 each coordinate [4Fe-4S] cluster.

This sequence belongs to the aconitase/IPM isomerase family. LeuC type 1 subfamily. In terms of assembly, heterodimer of LeuC and LeuD. [4Fe-4S] cluster serves as cofactor.

The catalysed reaction is (2R,3S)-3-isopropylmalate = (2S)-2-isopropylmalate. The protein operates within amino-acid biosynthesis; L-leucine biosynthesis; L-leucine from 3-methyl-2-oxobutanoate: step 2/4. Functionally, catalyzes the isomerization between 2-isopropylmalate and 3-isopropylmalate, via the formation of 2-isopropylmaleate. This Bacteroides thetaiotaomicron (strain ATCC 29148 / DSM 2079 / JCM 5827 / CCUG 10774 / NCTC 10582 / VPI-5482 / E50) protein is 3-isopropylmalate dehydratase large subunit.